The following is a 49-amino-acid chain: MVIGLVIFVSVAATIVGVLSNVLDMIMYVEENNEEDAKIKEEQELLLLY.

Met-1 is a topological domain (virion surface). Residues 2 to 22 (VIGLVIFVSVAATIVGVLSNV) traverse the membrane as a helical segment. Residues 23–49 (LDMIMYVEENNEEDAKIKEEQELLLLY) are Intravirion-facing.

Belongs to the orthopoxvirus OPG059 family.

The protein localises to the virion membrane. It localises to the host membrane. May play a role in cell adhesion and is important for virus virulence in vivo, although it is not required for the virus life cycle in cell cultures. The protein is Protein OPG059 (OPG059) of Cynomys gunnisoni (Gunnison's prairie dog).